A 542-amino-acid chain; its full sequence is Chaperonin GroEL 2 (542 aa).

Residues 29-32 (TLGP), 86-90 (DGTTT), Gly-413, 477-479 (NAA), and Asp-493 each bind ATP.

The protein belongs to the chaperonin (HSP60) family. Forms a cylinder of 14 subunits composed of two heptameric rings stacked back-to-back. Interacts with the co-chaperonin GroES.

It is found in the cytoplasm. The catalysed reaction is ATP + H2O + a folded polypeptide = ADP + phosphate + an unfolded polypeptide.. Together with its co-chaperonin GroES, plays an essential role in assisting protein folding. The GroEL-GroES system forms a nano-cage that allows encapsulation of the non-native substrate proteins and provides a physical environment optimized to promote and accelerate protein folding. The chain is Chaperonin GroEL 2 from Frankia alni (strain DSM 45986 / CECT 9034 / ACN14a).